The following is a 170-amino-acid chain: ATP synthase subunit b (170 aa).

The chain crosses the membrane as a helical span at residues 5 to 25 (YFIPCLLLPTMMLASGGGGET).

This sequence belongs to the ATPase B chain family. In terms of assembly, F-type ATPases have 2 components, F(1) - the catalytic core - and F(0) - the membrane proton channel. F(1) has five subunits: alpha(3), beta(3), gamma(1), delta(1), epsilon(1). F(0) has three main subunits: a(1), b(2) and c(10-14). The alpha and beta chains form an alternating ring which encloses part of the gamma chain. F(1) is attached to F(0) by a central stalk formed by the gamma and epsilon chains, while a peripheral stalk is formed by the delta and b chains.

Its subcellular location is the cell inner membrane. Functionally, f(1)F(0) ATP synthase produces ATP from ADP in the presence of a proton or sodium gradient. F-type ATPases consist of two structural domains, F(1) containing the extramembraneous catalytic core and F(0) containing the membrane proton channel, linked together by a central stalk and a peripheral stalk. During catalysis, ATP synthesis in the catalytic domain of F(1) is coupled via a rotary mechanism of the central stalk subunits to proton translocation. Component of the F(0) channel, it forms part of the peripheral stalk, linking F(1) to F(0). The chain is ATP synthase subunit b from Wolinella succinogenes (strain ATCC 29543 / DSM 1740 / CCUG 13145 / JCM 31913 / LMG 7466 / NCTC 11488 / FDC 602W) (Vibrio succinogenes).